The following is a 372-amino-acid chain: Ribosomal RNA small subunit methyltransferase H (372 aa).

S-adenosyl-L-methionine-binding positions include 78-80, aspartate 97, tyrosine 124, aspartate 148, and glutamine 155; that span reads GGH.

It belongs to the methyltransferase superfamily. RsmH family.

Its subcellular location is the cytoplasm. It catalyses the reaction cytidine(1402) in 16S rRNA + S-adenosyl-L-methionine = N(4)-methylcytidine(1402) in 16S rRNA + S-adenosyl-L-homocysteine + H(+). Functionally, specifically methylates the N4 position of cytidine in position 1402 (C1402) of 16S rRNA. The sequence is that of Ribosomal RNA small subunit methyltransferase H from Mycobacterium leprae (strain Br4923).